The chain runs to 427 residues: 3-phosphoshikimate 1-carboxyvinyltransferase (427 aa).

3 residues coordinate 3-phosphoshikimate: Lys-23, Ser-24, and Arg-28. Residue Lys-23 coordinates phosphoenolpyruvate. 2 residues coordinate phosphoenolpyruvate: Gly-97 and Arg-125. Residues Ser-170, Ser-171, Gln-172, Ser-198, Asp-314, Asn-337, and Lys-341 each coordinate 3-phosphoshikimate. Gln-172 is a phosphoenolpyruvate binding site. The active-site Proton acceptor is the Asp-314. 3 residues coordinate phosphoenolpyruvate: Arg-345, Arg-387, and Lys-412.

It belongs to the EPSP synthase family. Monomer.

It is found in the cytoplasm. It carries out the reaction 3-phosphoshikimate + phosphoenolpyruvate = 5-O-(1-carboxyvinyl)-3-phosphoshikimate + phosphate. The protein operates within metabolic intermediate biosynthesis; chorismate biosynthesis; chorismate from D-erythrose 4-phosphate and phosphoenolpyruvate: step 6/7. In terms of biological role, catalyzes the transfer of the enolpyruvyl moiety of phosphoenolpyruvate (PEP) to the 5-hydroxyl of shikimate-3-phosphate (S3P) to produce enolpyruvyl shikimate-3-phosphate and inorganic phosphate. The chain is 3-phosphoshikimate 1-carboxyvinyltransferase from Buchnera aphidicola subsp. Acyrthosiphon pisum (strain 5A).